The following is a 370-amino-acid chain: Integrin-linked kinase-associated serine/threonine phosphatase 2C (370 aa).

Met-1 carries the post-translational modification N-acetylmethionine. A disordered region spans residues 1–69; that stretch reads MDLFGDLPEP…SDEEKNGSEE (69 aa). Ser-13 carries the post-translational modification Phosphoserine. Residues 33–45 are compositionally biased toward low complexity; the sequence is SSGDSGSLDTSLS. The segment covering 46 to 69 has biased composition (basic and acidic residues); it reads EEVKNEGKGAKRKASDEEKNGSEE. Residues 86-368 form the PPM-type phosphatase domain; that stretch reads KGYVAERKGE…DNVTVMVVRI (283 aa). Positions 130 and 131 each coordinate Mn(2+). Lys-188 carries the N6-acetyllysine modification. Mn(2+)-binding residues include Asp-304 and Asp-359.

It belongs to the PP2C family. In terms of assembly, interacts with ILK. Mg(2+) serves as cofactor. The cofactor is Mn(2+).

Its subcellular location is the cytoplasm. It carries out the reaction O-phospho-L-seryl-[protein] + H2O = L-seryl-[protein] + phosphate. The enzyme catalyses O-phospho-L-threonyl-[protein] + H2O = L-threonyl-[protein] + phosphate. Protein phosphatase that may play a role in regulation of cell cycle progression via dephosphorylation of its substrates whose appropriate phosphorylation states might be crucial for cell proliferation. Selectively associates with integrin linked kinase (ILK), to modulate cell adhesion and growth factor signaling. Inhibits the ILK-GSK3B signaling axis and may play an important role in inhibiting oncogenic transformation. The polypeptide is Integrin-linked kinase-associated serine/threonine phosphatase 2C (ILKAP) (Bos taurus (Bovine)).